The primary structure comprises 339 residues: Ketol-acid reductoisomerase (NADP(+)) (339 aa).

Residues 1–182 enclose the KARI N-terminal Rossmann domain; the sequence is MRVYYDRDAD…GGGRSGVIET (182 aa). Residues 24 to 27, R48, S51, T53, and 83 to 86 each bind NADP(+); these read YGSQ and DELQ. The active site involves H108. Residue G134 coordinates NADP(+). The 146-residue stretch at 183–328 folds into the KARI C-terminal knotted domain; that stretch reads TFKEECETDL…GKLRAMMPWI (146 aa). Residues D191, E195, E227, and E231 each coordinate Mg(2+). S252 is a substrate binding site.

The protein belongs to the ketol-acid reductoisomerase family. The cofactor is Mg(2+).

The enzyme catalyses (2R)-2,3-dihydroxy-3-methylbutanoate + NADP(+) = (2S)-2-acetolactate + NADPH + H(+). The catalysed reaction is (2R,3R)-2,3-dihydroxy-3-methylpentanoate + NADP(+) = (S)-2-ethyl-2-hydroxy-3-oxobutanoate + NADPH + H(+). It functions in the pathway amino-acid biosynthesis; L-isoleucine biosynthesis; L-isoleucine from 2-oxobutanoate: step 2/4. It participates in amino-acid biosynthesis; L-valine biosynthesis; L-valine from pyruvate: step 2/4. Functionally, involved in the biosynthesis of branched-chain amino acids (BCAA). Catalyzes an alkyl-migration followed by a ketol-acid reduction of (S)-2-acetolactate (S2AL) to yield (R)-2,3-dihydroxy-isovalerate. In the isomerase reaction, S2AL is rearranged via a Mg-dependent methyl migration to produce 3-hydroxy-3-methyl-2-ketobutyrate (HMKB). In the reductase reaction, this 2-ketoacid undergoes a metal-dependent reduction by NADPH to yield (R)-2,3-dihydroxy-isovalerate. This chain is Ketol-acid reductoisomerase (NADP(+)), found in Brucella suis (strain ATCC 23445 / NCTC 10510).